The following is a 422-amino-acid chain: NADH-quinone oxidoreductase subunit D 1 (422 aa).

The protein belongs to the complex I 49 kDa subunit family. As to quaternary structure, NDH-1 is composed of 14 different subunits. Subunits NuoB, C, D, E, F, and G constitute the peripheral sector of the complex.

The protein localises to the cell membrane. The catalysed reaction is a quinone + NADH + 5 H(+)(in) = a quinol + NAD(+) + 4 H(+)(out). Its function is as follows. NDH-1 shuttles electrons from NADH, via FMN and iron-sulfur (Fe-S) centers, to quinones in the respiratory chain. The immediate electron acceptor for the enzyme in this species is believed to be ubiquinone. Couples the redox reaction to proton translocation (for every two electrons transferred, four hydrogen ions are translocated across the cytoplasmic membrane), and thus conserves the redox energy in a proton gradient. In Herpetosiphon aurantiacus (strain ATCC 23779 / DSM 785 / 114-95), this protein is NADH-quinone oxidoreductase subunit D 1.